A 559-amino-acid polypeptide reads, in one-letter code: Glutamine--tRNA ligase (559 aa).

A 'HIGH' region motif is present at residues 44–54; that stretch reads PEPNGYLHIGH. Residues 45 to 47 and 51 to 57 contribute to the ATP site; these read EPN and HIGHAKS. Asp-77 and Tyr-222 together coordinate L-glutamine. ATP-binding positions include Thr-241 and 272–273; that span reads RL. The 'KMSKS' region motif lies at 279 to 283; sequence LTSKR.

This sequence belongs to the class-I aminoacyl-tRNA synthetase family. In terms of assembly, monomer.

Its subcellular location is the cytoplasm. The enzyme catalyses tRNA(Gln) + L-glutamine + ATP = L-glutaminyl-tRNA(Gln) + AMP + diphosphate. The polypeptide is Glutamine--tRNA ligase (Actinobacillus succinogenes (strain ATCC 55618 / DSM 22257 / CCUG 43843 / 130Z)).